The primary structure comprises 362 residues: MRPYLLLTPGPLTTSESVKTAMMTDWCTWDEDYNVHIVEEIRKGLVQLATRKTDEYTSILMQGSGTYCVEATLGSVITPKHKLLILSNGAYGDRMGNIAEYHEMNYDMLAFDETEQVSVEYVDDYLAHNAEITHVAVVHCETTTGILNPLKEIAHMVKMHGKKLIVDAMSSFGGVPLDVEELGIDFMISSANKCIQGVPGFGFIIARKSELQYCKGVSKSLSLDIYDQWDAMEKGHGKWRFTSPTHVVRAFKQAMDELAAEGGVEARHARYCRNHDVLVEGMRSLGFKTLLKDEVQSPVITSFLYPDKEFDFKEFYHQLKEKGFVIYPGKISQADTFRIGNIGDVFPEDFSRLIEAIKTVAK.

Lysine 193 carries the post-translational modification N6-(pyridoxal phosphate)lysine.

The protein belongs to the class-V pyridoxal-phosphate-dependent aminotransferase family. PhnW subfamily. In terms of assembly, homodimer. Requires pyridoxal 5'-phosphate as cofactor.

It carries out the reaction (2-aminoethyl)phosphonate + pyruvate = phosphonoacetaldehyde + L-alanine. Involved in phosphonate degradation. The chain is 2-aminoethylphosphonate--pyruvate transaminase from Phocaeicola vulgatus (strain ATCC 8482 / DSM 1447 / JCM 5826 / CCUG 4940 / NBRC 14291 / NCTC 11154) (Bacteroides vulgatus).